The following is a 129-amino-acid chain: uncharacterized protein (129 aa).

Residues 44 to 63 (PYRAADRSNDQDNDRSGGNV) form a disordered region. Residues 46–58 (RAADRSNDQDNDR) show a composition bias toward basic and acidic residues. A run of 2 helical transmembrane segments spans residues 78 to 98 (IISLFVLPVLLGAAGIIVGYI) and 109 to 129 (AWAMGIGVVSLVLGIFIIPFF).

The protein resides in the cell membrane. This is an uncharacterized protein from Bacillus subtilis (strain 168).